Consider the following 334-residue polypeptide: Holliday junction branch migration complex subunit RuvB (334 aa).

Residues 1-179 are large ATPase domain (RuvB-L); it reads MTHKISVLHQ…FAFTGRVDYY (179 aa). ATP is bound by residues L18, R19, G60, K63, T64, S65, 126 to 128, R169, Y179, and R216; that span reads EDF. T64 is a binding site for Mg(2+). The small ATPAse domain (RuvB-S) stretch occupies residues 180 to 250; sequence TDEDLVSILS…VAEKALAMLL (71 aa). The tract at residues 253-334 is head domain (RuvB-H); that stretch reads NLGLNEIDIK…RNPKDRWGEE (82 aa). DNA-binding residues include R308 and R313.

This sequence belongs to the RuvB family. Homohexamer. Forms an RuvA(8)-RuvB(12)-Holliday junction (HJ) complex. HJ DNA is sandwiched between 2 RuvA tetramers; dsDNA enters through RuvA and exits via RuvB. An RuvB hexamer assembles on each DNA strand where it exits the tetramer. Each RuvB hexamer is contacted by two RuvA subunits (via domain III) on 2 adjacent RuvB subunits; this complex drives branch migration. In the full resolvosome a probable DNA-RuvA(4)-RuvB(12)-RuvC(2) complex forms which resolves the HJ.

It localises to the cytoplasm. It catalyses the reaction ATP + H2O = ADP + phosphate + H(+). In terms of biological role, the RuvA-RuvB-RuvC complex processes Holliday junction (HJ) DNA during genetic recombination and DNA repair, while the RuvA-RuvB complex plays an important role in the rescue of blocked DNA replication forks via replication fork reversal (RFR). RuvA specifically binds to HJ cruciform DNA, conferring on it an open structure. The RuvB hexamer acts as an ATP-dependent pump, pulling dsDNA into and through the RuvAB complex. RuvB forms 2 homohexamers on either side of HJ DNA bound by 1 or 2 RuvA tetramers; 4 subunits per hexamer contact DNA at a time. Coordinated motions by a converter formed by DNA-disengaged RuvB subunits stimulates ATP hydrolysis and nucleotide exchange. Immobilization of the converter enables RuvB to convert the ATP-contained energy into a lever motion, pulling 2 nucleotides of DNA out of the RuvA tetramer per ATP hydrolyzed, thus driving DNA branch migration. The RuvB motors rotate together with the DNA substrate, which together with the progressing nucleotide cycle form the mechanistic basis for DNA recombination by continuous HJ branch migration. Branch migration allows RuvC to scan DNA until it finds its consensus sequence, where it cleaves and resolves cruciform DNA. In Chlamydia trachomatis serovar L2 (strain ATCC VR-902B / DSM 19102 / 434/Bu), this protein is Holliday junction branch migration complex subunit RuvB.